The primary structure comprises 88 residues: Small ribosomal subunit protein uS15 (88 aa).

It belongs to the universal ribosomal protein uS15 family. As to quaternary structure, part of the 30S ribosomal subunit. Forms a bridge to the 50S subunit in the 70S ribosome, contacting the 23S rRNA.

Its function is as follows. One of the primary rRNA binding proteins, it binds directly to 16S rRNA where it helps nucleate assembly of the platform of the 30S subunit by binding and bridging several RNA helices of the 16S rRNA. Functionally, forms an intersubunit bridge (bridge B4) with the 23S rRNA of the 50S subunit in the ribosome. The polypeptide is Small ribosomal subunit protein uS15 (Opitutus terrae (strain DSM 11246 / JCM 15787 / PB90-1)).